Consider the following 452-residue polypeptide: tRNA-2-methylthio-N(6)-dimethylallyladenosine synthase (452 aa).

The MTTase N-terminal domain maps to 5–121 (RRYHITTFGC…LADLLAQVEA (117 aa)). [4Fe-4S] cluster-binding residues include cysteine 14, cysteine 50, cysteine 84, cysteine 156, cysteine 160, and cysteine 163. Residues 142–379 (RDSTITAWVN…NHLVAQMAAD (238 aa)) form the Radical SAM core domain. Residues 382–446 (QRYLGRTEEV…AFSLTGQILS (65 aa)) form the TRAM domain.

Belongs to the methylthiotransferase family. MiaB subfamily. Monomer. [4Fe-4S] cluster serves as cofactor.

Its subcellular location is the cytoplasm. It carries out the reaction N(6)-dimethylallyladenosine(37) in tRNA + (sulfur carrier)-SH + AH2 + 2 S-adenosyl-L-methionine = 2-methylsulfanyl-N(6)-dimethylallyladenosine(37) in tRNA + (sulfur carrier)-H + 5'-deoxyadenosine + L-methionine + A + S-adenosyl-L-homocysteine + 2 H(+). In terms of biological role, catalyzes the methylthiolation of N6-(dimethylallyl)adenosine (i(6)A), leading to the formation of 2-methylthio-N6-(dimethylallyl)adenosine (ms(2)i(6)A) at position 37 in tRNAs that read codons beginning with uridine. This chain is tRNA-2-methylthio-N(6)-dimethylallyladenosine synthase, found in Synechococcus elongatus (strain ATCC 33912 / PCC 7942 / FACHB-805) (Anacystis nidulans R2).